A 265-amino-acid chain; its full sequence is Small ribosomal subunit protein uS2 (265 aa).

The protein belongs to the universal ribosomal protein uS2 family.

This Aliarcobacter butzleri (strain RM4018) (Arcobacter butzleri) protein is Small ribosomal subunit protein uS2.